We begin with the raw amino-acid sequence, 198 residues long: Holliday junction branch migration complex subunit RuvA (198 aa).

Positions 1 to 61 are domain I; the sequence is MTLYKIGEIV…DYIQQTYGFK (61 aa). A domain II region spans residues 62 to 139; it reads TFKERLLFTD…KIIQNKEVKK (78 aa). The interval 140-144 is flexible linker; it reads FDDIT. A domain III region spans residues 144–198; sequence TNIKELKQTLNKLGFKASDIDYAVNNISSTKELDLMVEESINLITTQMHANNQTT.

It belongs to the RuvA family. Homotetramer. Forms an RuvA(8)-RuvB(12)-Holliday junction (HJ) complex. HJ DNA is sandwiched between 2 RuvA tetramers; dsDNA enters through RuvA and exits via RuvB. An RuvB hexamer assembles on each DNA strand where it exits the tetramer. Each RuvB hexamer is contacted by two RuvA subunits (via domain III) on 2 adjacent RuvB subunits; this complex drives branch migration. In the full resolvosome a probable DNA-RuvA(4)-RuvB(12)-RuvC(2) complex forms which resolves the HJ.

The protein resides in the cytoplasm. In terms of biological role, the RuvA-RuvB-RuvC complex processes Holliday junction (HJ) DNA during genetic recombination and DNA repair, while the RuvA-RuvB complex plays an important role in the rescue of blocked DNA replication forks via replication fork reversal (RFR). RuvA specifically binds to HJ cruciform DNA, conferring on it an open structure. The RuvB hexamer acts as an ATP-dependent pump, pulling dsDNA into and through the RuvAB complex. HJ branch migration allows RuvC to scan DNA until it finds its consensus sequence, where it cleaves and resolves the cruciform DNA. The sequence is that of Holliday junction branch migration complex subunit RuvA from Mycoplasmopsis synoviae (strain 53) (Mycoplasma synoviae).